We begin with the raw amino-acid sequence, 795 residues long: Phenylalanine--tRNA ligase beta subunit (795 aa).

The tRNA-binding domain maps to 39 to 148 (AGEFTGVKVG…EGTTLGADVR (110 aa)). Residues 401 to 476 (PKANTVELRR…RIYGYNNIPN (76 aa)) form the B5 domain. Residues D454, D460, E463, and E464 each coordinate Mg(2+). One can recognise an FDX-ACB domain in the interval 701–794 (SKFPANRRDI…IGEKFSATLR (94 aa)).

It belongs to the phenylalanyl-tRNA synthetase beta subunit family. Type 1 subfamily. As to quaternary structure, tetramer of two alpha and two beta subunits. Mg(2+) is required as a cofactor.

It localises to the cytoplasm. The enzyme catalyses tRNA(Phe) + L-phenylalanine + ATP = L-phenylalanyl-tRNA(Phe) + AMP + diphosphate + H(+). This is Phenylalanine--tRNA ligase beta subunit from Aliivibrio fischeri (strain ATCC 700601 / ES114) (Vibrio fischeri).